The sequence spans 345 residues: DNA primase small subunit PriS (345 aa).

Active-site residues include Asp95 and Asp97. Zn(2+)-binding residues include Cys106, His108, Cys114, and Cys117. The Zinc knuckle motif motif lies at 106 to 117; that stretch reads CNHEPGKVCPIC. Asp280 is an active-site residue.

This sequence belongs to the eukaryotic-type primase small subunit family. As to quaternary structure, heterodimer of a small subunit (PriS) and a large subunit (PriL). It depends on Mg(2+) as a cofactor. Mn(2+) serves as cofactor.

In terms of biological role, catalytic subunit of DNA primase, an RNA polymerase that catalyzes the synthesis of short RNA molecules used as primers for DNA polymerase during DNA replication. The small subunit contains the primase catalytic core and has DNA synthesis activity on its own, synthesizing DNA strands up to 3 kB. Binding to the large subunit stabilizes and modulates the activity, increasing the rate of DNA synthesis while decreasing the length of the DNA fragments, and conferring RNA synthesis capability for RNA fragments up to 150 bases. The DNA polymerase activity may enable DNA primase to also catalyze primer extension after primer synthesis. May also play a role in DNA repair. Displays gap-filling and strand-displacement activities. This is DNA primase small subunit PriS from Pyrococcus abyssi (strain GE5 / Orsay).